Consider the following 150-residue polypeptide: Allograft inflammatory factor 1-like (150 aa).

The residue at position 2 (Ser2) is an N-acetylserine. Ser2 bears the Phosphoserine mark. One can recognise an EF-hand 1 domain in the interval Glu47–Pro82. Ca(2+)-binding residues include Asp60, Asn62, Glu64, and Glu66. The region spanning Lys83–Ser117 is the EF-hand 2; degenerate domain. The segment at Lys129–Pro150 is disordered. Phosphoserine is present on Ser134.

In terms of assembly, homodimer (Potential). Monomer.

Its subcellular location is the cytoplasm. The protein localises to the cytoskeleton. It localises to the cell projection. It is found in the ruffle membrane. Functionally, actin-binding protein that promotes actin bundling. May neither bind calcium nor depend on calcium for function. The chain is Allograft inflammatory factor 1-like (AIF1L) from Homo sapiens (Human).